We begin with the raw amino-acid sequence, 150 residues long: Troponin C, isotype gamma (150 aa).

Position 1 is an N-acetylmethionine (methionine 1). EF-hand domains follow at residues 7 to 42 (EQLS…MGVK), 43 to 78 (ISEK…FLIE), 83 to 118 (ALKA…LDNR), and 119 to 150 (LTED…MMSG). Residues aspartate 56, aspartate 58, serine 60, glutamate 62, and glutamate 67 each coordinate Ca(2+). The Ca(2+) site is built by aspartate 132, aspartate 134, serine 136, threonine 138, and glutamate 143.

It belongs to the troponin C family.

Troponin is the central regulatory protein of striated muscle contraction. Tn consists of three components: Tn-I which is the inhibitor of actomyosin ATPase, Tn-T which contains the binding site for tropomyosin and Tn-C. The binding of calcium to Tn-C abolishes the inhibitory action of Tn on actin filaments. This Astacus leptodactylus (Turkish narrow-clawed crayfish) protein is Troponin C, isotype gamma.